We begin with the raw amino-acid sequence, 194 residues long: Holliday junction branch migration complex subunit RuvA (194 aa).

Positions 1 to 64 (MIGRLRGVLT…DDSAALYGFL (64 aa)) are domain I. The interval 65–140 (SESERRLFRH…RAADFNNGIS (76 aa)) is domain II. Residues 140 to 144 (STSGK) are flexible linker. The segment at 145-194 (LNLDTVSEAALALQQLGYKPAEAARMARDAGTESDDVATVIKKALQAALC) is domain III.

The protein belongs to the RuvA family. As to quaternary structure, homotetramer. Forms an RuvA(8)-RuvB(12)-Holliday junction (HJ) complex. HJ DNA is sandwiched between 2 RuvA tetramers; dsDNA enters through RuvA and exits via RuvB. An RuvB hexamer assembles on each DNA strand where it exits the tetramer. Each RuvB hexamer is contacted by two RuvA subunits (via domain III) on 2 adjacent RuvB subunits; this complex drives branch migration. In the full resolvosome a probable DNA-RuvA(4)-RuvB(12)-RuvC(2) complex forms which resolves the HJ.

The protein localises to the cytoplasm. Functionally, the RuvA-RuvB-RuvC complex processes Holliday junction (HJ) DNA during genetic recombination and DNA repair, while the RuvA-RuvB complex plays an important role in the rescue of blocked DNA replication forks via replication fork reversal (RFR). RuvA specifically binds to HJ cruciform DNA, conferring on it an open structure. The RuvB hexamer acts as an ATP-dependent pump, pulling dsDNA into and through the RuvAB complex. HJ branch migration allows RuvC to scan DNA until it finds its consensus sequence, where it cleaves and resolves the cruciform DNA. The chain is Holliday junction branch migration complex subunit RuvA from Xylella fastidiosa (strain M12).